We begin with the raw amino-acid sequence, 458 residues long: KAT8 regulatory NSL complex subunit 2 (458 aa).

Residue Lys-78 forms a Glycyl lysine isopeptide (Lys-Gly) (interchain with G-Cter in SUMO2) linkage. Positions 126-182 are disordered; the sequence is ELGSQTPESSRSEASRILDEDSWSDGDQEPITVDQTWRGDPDSEADSIDSDQEDPLK. Position 131 is a phosphothreonine (Thr-131). Over residues 135-144 the composition is skewed to basic and acidic residues; it reads SRSEASRILD. A phosphoserine mark is found at Ser-147, Ser-149, Ser-168, Ser-172, and Ser-175. Positions 167–178 are enriched in acidic residues; that stretch reads DSEADSIDSDQE. Residues 308–364 form a required for interaction with other NSL complex members region; that stretch reads DVRCSNQSLPMTRHCLTHICQDTNQVLFKCCQGSEEVPCNKPVPVSLSEDPCCPLHF. The segment at 419–458 is disordered; sequence QMAGDGCRSQGPRNSEKAPAPLPQSGIATANGKPEPTSVS.

As to quaternary structure, component of the NSL complex at least composed of KAT8/MOF, KANSL1, KANSL2, KANSL3, MCRS1, PHF20, OGT1/OGT, WDR5 and HCFC1.

It is found in the nucleus. The protein resides in the mitochondrion. Its function is as follows. Non-catalytic component of the NSL histone acetyltransferase complex, a multiprotein complex that mediates histone H4 acetylation at 'Lys-5'- and 'Lys-8' (H4K5ac and H4K8ac) at transcription start sites and promotes transcription initiation. Required for NSL complex stability and for transcription of intraciliary transport genes in both ciliated and non-ciliated cells by regulating histone H4 acetylation at 'Lys-5'- and 'Lys-12' (H4K5ac and H4K12ac). This is necessary for cilium assembly in ciliated cells and for organization of the microtubule cytoskeleton in non-ciliated cells. Required within the NSL complex to maintain nuclear architecture stability by promoting KAT8-mediated acetylation of lamin LMNA. The protein is KAT8 regulatory NSL complex subunit 2 (KANSL2) of Bos taurus (Bovine).